A 427-amino-acid polypeptide reads, in one-letter code: Serine hydroxymethyltransferase (427 aa).

(6S)-5,6,7,8-tetrahydrofolate-binding positions include leucine 122 and 126–128 (GHL). Lysine 231 carries the N6-(pyridoxal phosphate)lysine modification. 355-357 (SPF) contributes to the (6S)-5,6,7,8-tetrahydrofolate binding site.

This sequence belongs to the SHMT family. In terms of assembly, homodimer. It depends on pyridoxal 5'-phosphate as a cofactor.

It is found in the cytoplasm. It catalyses the reaction (6R)-5,10-methylene-5,6,7,8-tetrahydrofolate + glycine + H2O = (6S)-5,6,7,8-tetrahydrofolate + L-serine. Its pathway is one-carbon metabolism; tetrahydrofolate interconversion. It functions in the pathway amino-acid biosynthesis; glycine biosynthesis; glycine from L-serine: step 1/1. Functionally, catalyzes the reversible interconversion of serine and glycine with tetrahydrofolate (THF) serving as the one-carbon carrier. This reaction serves as the major source of one-carbon groups required for the biosynthesis of purines, thymidylate, methionine, and other important biomolecules. Also exhibits THF-independent aldolase activity toward beta-hydroxyamino acids, producing glycine and aldehydes, via a retro-aldol mechanism. The protein is Serine hydroxymethyltransferase of Nostoc punctiforme (strain ATCC 29133 / PCC 73102).